Consider the following 327-residue polypeptide: Phenylalanine--tRNA ligase alpha subunit (327 aa).

Glu-252 contacts Mg(2+).

It belongs to the class-II aminoacyl-tRNA synthetase family. Phe-tRNA synthetase alpha subunit type 1 subfamily. Tetramer of two alpha and two beta subunits. The cofactor is Mg(2+).

Its subcellular location is the cytoplasm. The enzyme catalyses tRNA(Phe) + L-phenylalanine + ATP = L-phenylalanyl-tRNA(Phe) + AMP + diphosphate + H(+). The chain is Phenylalanine--tRNA ligase alpha subunit from Tolumonas auensis (strain DSM 9187 / NBRC 110442 / TA 4).